Reading from the N-terminus, the 146-residue chain is MTVEVLFKGGYTPQRAFDGDAGFDLQSSHTAVIQPRCRQVVKTGIAIALPDGYAGFIMPRSGLASENGITLVNSPGVIDAGYRGEISVVLINTDLHQAFHISQGDRIAQLVIMPVCHASFIEVDTLPGSARGISAFGSSGRHDTRG.

Substrate contacts are provided by residues 60–62, Asn-73, and 77–79; these read RSG and VID.

The protein belongs to the dUTPase family. Mg(2+) serves as cofactor.

The enzyme catalyses dUTP + H2O = dUMP + diphosphate + H(+). The protein operates within pyrimidine metabolism; dUMP biosynthesis; dUMP from dCTP (dUTP route): step 2/2. Functionally, this enzyme is involved in nucleotide metabolism: it produces dUMP, the immediate precursor of thymidine nucleotides and it decreases the intracellular concentration of dUTP so that uracil cannot be incorporated into DNA. In Tropheryma whipplei (strain TW08/27) (Whipple's bacillus), this protein is Deoxyuridine 5'-triphosphate nucleotidohydrolase.